A 173-amino-acid polypeptide reads, in one-letter code: Lipoprotein signal peptidase (173 aa).

Transmembrane regions (helical) follow at residues 7–27, 41–61, 70–90, and 95–115; these read FFWFTALLSLLLDHLTKLWVV, LWPGVFHLTYVTNTGAAFSLF, WLSLGVSVGLMALAILGPNFN, and AGYGFLLGGAAGNGIDRFVAG. Active-site residues include D119 and D135. Residues 130–150 traverse the membrane as a helical segment; it reads IFNLADVFINIGIICLLIAAW.

It belongs to the peptidase A8 family.

It is found in the cell inner membrane. The enzyme catalyses Release of signal peptides from bacterial membrane prolipoproteins. Hydrolyzes -Xaa-Yaa-Zaa-|-(S,diacylglyceryl)Cys-, in which Xaa is hydrophobic (preferably Leu), and Yaa (Ala or Ser) and Zaa (Gly or Ala) have small, neutral side chains.. It participates in protein modification; lipoprotein biosynthesis (signal peptide cleavage). Its function is as follows. This protein specifically catalyzes the removal of signal peptides from prolipoproteins. This Cyanothece sp. (strain PCC 7425 / ATCC 29141) protein is Lipoprotein signal peptidase.